The sequence spans 277 residues: Phosphate import ATP-binding protein PstB (277 aa).

The ABC transporter domain maps to 31–272 (IEVPGLSLYY…PAKKQTEDYI (242 aa)). Position 63–70 (63–70 (GPSGCGKS)) interacts with ATP.

It belongs to the ABC transporter superfamily. Phosphate importer (TC 3.A.1.7) family. As to quaternary structure, the complex is composed of two ATP-binding proteins (PstB), two transmembrane proteins (PstC and PstA) and a solute-binding protein (PstS).

It is found in the cell inner membrane. The enzyme catalyses phosphate(out) + ATP + H2O = ADP + 2 phosphate(in) + H(+). Its function is as follows. Part of the ABC transporter complex PstSACB involved in phosphate import. Responsible for energy coupling to the transport system. This is Phosphate import ATP-binding protein PstB from Pseudomonas fluorescens (strain ATCC BAA-477 / NRRL B-23932 / Pf-5).